The sequence spans 103 residues: Co-chaperonin GroES (103 aa).

Belongs to the GroES chaperonin family. In terms of assembly, heptamer of 7 subunits arranged in a ring. Interacts with the chaperonin GroEL.

Its subcellular location is the cytoplasm. Functionally, together with the chaperonin GroEL, plays an essential role in assisting protein folding. The GroEL-GroES system forms a nano-cage that allows encapsulation of the non-native substrate proteins and provides a physical environment optimized to promote and accelerate protein folding. GroES binds to the apical surface of the GroEL ring, thereby capping the opening of the GroEL channel. The polypeptide is Co-chaperonin GroES (Synechococcus sp. (strain JA-3-3Ab) (Cyanobacteria bacterium Yellowstone A-Prime)).